An 88-amino-acid polypeptide reads, in one-letter code: Small ribosomal subunit protein bS21 (88 aa).

The segment at 58-88 is disordered; that stretch reads ARKRAQREGLLPMTPRPVAAGGAAGAARPPR. The span at 73–88 shows a compositional bias: low complexity; the sequence is RPVAAGGAAGAARPPR.

Belongs to the bacterial ribosomal protein bS21 family.

The polypeptide is Small ribosomal subunit protein bS21 (Mesorhizobium japonicum (strain LMG 29417 / CECT 9101 / MAFF 303099) (Mesorhizobium loti (strain MAFF 303099))).